The primary structure comprises 387 residues: S-adenosylmethionine synthase (387 aa).

Residue histidine 15 participates in ATP binding. Aspartate 17 is a binding site for Mg(2+). Glutamate 43 is a K(+) binding site. L-methionine is bound by residues glutamate 56 and glutamine 99. The interval glutamine 99–asparagine 109 is flexible loop. ATP contacts are provided by residues aspartate 166–lysine 168, arginine 232–phenylalanine 233, aspartate 241, arginine 247–lysine 248, alanine 264, and lysine 268. L-methionine is bound at residue aspartate 241. Lysine 272 lines the L-methionine pocket.

This sequence belongs to the AdoMet synthase family. In terms of assembly, homotetramer; dimer of dimers. Mg(2+) serves as cofactor. K(+) is required as a cofactor.

Its subcellular location is the cytoplasm. It catalyses the reaction L-methionine + ATP + H2O = S-adenosyl-L-methionine + phosphate + diphosphate. It functions in the pathway amino-acid biosynthesis; S-adenosyl-L-methionine biosynthesis; S-adenosyl-L-methionine from L-methionine: step 1/1. Catalyzes the formation of S-adenosylmethionine (AdoMet) from methionine and ATP. The overall synthetic reaction is composed of two sequential steps, AdoMet formation and the subsequent tripolyphosphate hydrolysis which occurs prior to release of AdoMet from the enzyme. The sequence is that of S-adenosylmethionine synthase from Methylobacillus flagellatus (strain ATCC 51484 / DSM 6875 / VKM B-1610 / KT).